Consider the following 119-residue polypeptide: MLHWGPKFWRALHLYAIFFSDAPNWKEKYEAIQWILNFIESLPCTMCRHHAFSYLTKNPLTLNNSEDFQYWTFAFHNNVNKRLNKKIISWSEYKNIYEQSILKTIEYGKTDFIGAWSSL.

One can recognise an ERV/ALR sulfhydryl oxidase domain in the interval 1 to 97 (MLHWGPKFWR…ISWSEYKNIY (97 aa)). Cysteines 44 and 47 form a disulfide.

It belongs to the asfivirus B119L family. Interacts with A151R. The cofactor is FAD.

The protein resides in the host cytoplasm. It is found in the virion. The catalysed reaction is 2 R'C(R)SH + O2 = R'C(R)S-S(R)CR' + H2O2. Functionally, FAD-dependent sulfhydryl oxidase that catalyzes the formation of disulfide bonds in viral proteins produced in the cell cytoplasm. This is FAD-linked sulfhydryl oxidase from Ornithodoros (relapsing fever ticks).